A 590-amino-acid polypeptide reads, in one-letter code: Probable indole-3-acetic acid-amido synthetase GH3.1 (590 aa).

This sequence belongs to the IAA-amido conjugating enzyme family.

Its function is as follows. Catalyzes the synthesis of indole-3-acetic acid (IAA)-amino acid conjugates, providing a mechanism for the plant to cope with the presence of excess auxin. This Arabidopsis thaliana (Mouse-ear cress) protein is Probable indole-3-acetic acid-amido synthetase GH3.1 (GH3.1).